We begin with the raw amino-acid sequence, 499 residues long: Thermostable carboxypeptidase 1 (499 aa).

In terms of domain architecture, Peptidase M32 spans 6 to 499; that stretch reads QNETIKQILA…FVRWVKEKYL (494 aa). Residues 238 to 240 carry the HPF motif; that stretch reads HPF. Positions 248 to 252 match the DXRXT motif; sequence DVRIT. His269 is a binding site for Co(2+). The HEXXH signature appears at 269-273; the sequence is HEFGH. Glu270 functions as the Proton donor/acceptor in the catalytic mechanism. 2 residues coordinate Co(2+): His273 and Glu299. The HES/GQ motif lies at 298-301; sequence HESQ. Residues 350-355 carry the I/NRXXA/SD motif; that stretch reads IRTEAD. The GXXQDXHW motif lies at 405 to 412; sequence GILQDIHW.

The protein belongs to the peptidase M32 family. As to quaternary structure, homodimer. The cofactor is Co(2+). It depends on Mn(2+) as a cofactor.

It carries out the reaction Release of a C-terminal amino acid with broad specificity, except for -Pro.. With respect to regulation, EDTA and DTT reversibly abolish carboxypeptidase activity. Broad specificity carboxypetidase that releases amino acids sequentially from the C-terminus, including neutral, aromatic, polar and basic residues, but not Pro, Gly, Asp and Glu. This Pyrococcus furiosus (strain ATCC 43587 / DSM 3638 / JCM 8422 / Vc1) protein is Thermostable carboxypeptidase 1.